The following is a 245-amino-acid chain: MASPSRRLQTKPVITCFKSVLLIYTFIFWITGVILLAVGIWGKVSLENYFSLLNEKATNVPFVLIATGTVIILLGTFGCFATCRASAWMLKLYAMFLTLIFLVELVAAIVGFVFRHEIKNSFKNNYEKALKQYNSTGDYRSHAVDKIQNTLHCCGVTDYRDWTDTNYYSEKGFPKSCCKLEDCTPQRDADKVNNEGCFIKVMTIIESEMGVVAGISFGVACFQLIGIFLAYCLSRAITNNQYEIV.

At 1-19 the chain is on the cytoplasmic side; that stretch reads MASPSRRLQTKPVITCFKS. Residues 20-40 traverse the membrane as a helical segment; it reads VLLIYTFIFWITGVILLAVGI. The Extracellular segment spans residues 41-59; the sequence is WGKVSLENYFSLLNEKATN. Residues 60–80 traverse the membrane as a helical segment; sequence VPFVLIATGTVIILLGTFGCF. Residues 81-93 are Cytoplasmic-facing; it reads ATCRASAWMLKLY. A helical transmembrane segment spans residues 94 to 114; the sequence is AMFLTLIFLVELVAAIVGFVF. Over 115-208 the chain is Extracellular; sequence RHEIKNSFKN…IKVMTIIESE (94 aa). N-linked (GlcNAc...) asparagine glycosylation occurs at N134. The chain crosses the membrane as a helical span at residues 209–229; the sequence is MGVVAGISFGVACFQLIGIFL. Over 230 to 245 the chain is Cytoplasmic; it reads AYCLSRAITNNQYEIV.

The protein belongs to the tetraspanin (TM4SF) family.

The protein resides in the membrane. In Pongo abelii (Sumatran orangutan), this protein is Tetraspanin-6 (TSPAN6).